The chain runs to 135 residues: MLLLTVVLLVGVTLAADHPTLYAPKGGSIELGVGAKQKGQYKFEWRFGNLKIVIAEMSSTNQLEIKFPDNGFQNRSEFNPTKHNLTIHNASYEDSGTYSLHQEENDGTEHTDNFKVIVQGMSLYTYLQYALISPI.

This is an uncharacterized protein from Fowl adenovirus A serotype 1 (strain CELO / Phelps) (FAdV-1).